Here is a 149-residue protein sequence, read N- to C-terminus: Transcriptional repressor NrdR (149 aa).

A zinc finger spans residues cysteine 3–cysteine 34. Residues proline 49–glutamate 139 form the ATP-cone domain.

The protein belongs to the NrdR family. Requires Zn(2+) as cofactor.

Negatively regulates transcription of bacterial ribonucleotide reductase nrd genes and operons by binding to NrdR-boxes. The sequence is that of Transcriptional repressor NrdR from Alteromonas mediterranea (strain DSM 17117 / CIP 110805 / LMG 28347 / Deep ecotype).